Reading from the N-terminus, the 621-residue chain is Pre-mRNA-processing protein 45 (621 aa).

Disordered regions lie at residues 1-73, 137-164, 220-251, 347-438, and 542-621; these read MSAT…YANG, SQRT…SNTE, AQRD…RSPP, RARE…ELRM, and GKND…EHDS. A compositionally biased stretch (low complexity) spans 36–51; it reads PSTSSSSSALVSTSSP. Composition is skewed to basic and acidic residues over residues 140-164 and 220-229; these read TDIK…SNTE and AQRDPLEPPR. The span at 239-248 shows a compositional bias: pro residues; the sequence is PPSPPPPVLR. The segment covering 364-380 has biased composition (basic and acidic residues); it reads GRDDDVASRLADSDARP. Over residues 403 to 417 the composition is skewed to acidic residues; sequence DSDESAASDEEDDEG. Basic and acidic residues-rich tracts occupy residues 418–437 and 594–621; these read ARER…RELR and EDAK…EHDS.

This sequence belongs to the SNW family. As to quaternary structure, associated with the spliceosome.

It localises to the nucleus. Its function is as follows. Involved in pre-mRNA splicing. This Mycosarcoma maydis (Corn smut fungus) protein is Pre-mRNA-processing protein 45 (PRP45).